The chain runs to 161 residues: UPF0178 protein Rsph17025_3122 (161 aa).

This sequence belongs to the UPF0178 family.

The sequence is that of UPF0178 protein Rsph17025_3122 from Cereibacter sphaeroides (strain ATCC 17025 / ATH 2.4.3) (Rhodobacter sphaeroides).